A 373-amino-acid polypeptide reads, in one-letter code: Peptide chain release factor 2 (373 aa).

An N5-methylglutamine modification is found at Gln-252.

The protein belongs to the prokaryotic/mitochondrial release factor family. Methylated by PrmC. Methylation increases the termination efficiency of RF2.

Its subcellular location is the cytoplasm. Peptide chain release factor 2 directs the termination of translation in response to the peptide chain termination codons UGA and UAA. In Staphylococcus saprophyticus subsp. saprophyticus (strain ATCC 15305 / DSM 20229 / NCIMB 8711 / NCTC 7292 / S-41), this protein is Peptide chain release factor 2.